A 964-amino-acid polypeptide reads, in one-letter code: Cycloisomaltooligosaccharide glucanotransferase (964 aa).

Positions 1–30 (MRVKILPLVFMTLLLIVPSQMLLPSGQANA) are cleaved as a signal peptide. CBM6 domains lie at 413–538 (DRYE…LTLG) and 740–863 (NMYE…LKLD).

This sequence belongs to the glycosyl hydrolase 66 family.

The enzyme catalyses cyclizes part of a (1-&gt;6)-alpha-D-glucan chain by formation of a (1-&gt;6)-alpha-D-glucosidic bond.. Functionally, produces cycloisomaltooligosaccharide from dextran. The polypeptide is Cycloisomaltooligosaccharide glucanotransferase (cit) (Niallia circulans (Bacillus circulans)).